The following is a 416-amino-acid chain: Putative gustatory receptor 57a (416 aa).

Residues 1–13 (MAVLYFFREPETV) are Cytoplasmic-facing. Residues 14–34 (FDCAAFICILQFLMGCNGFGI) form a helical membrane-spanning segment. Over 35–48 (RRSTFRISWASRIY) the chain is Extracellular. Residues 49–69 (SMSVAIAAFCCLFGSLSVLLA) traverse the membrane as a helical segment. Over 70–83 (EEDIRERLAKADNL) the chain is Cytoplasmic. The helical transmembrane segment at 84–104 (VLSISALELLMSTLVFGVTVI) threads the bilayer. The Extracellular segment spans residues 105–143 (SLQVFARRHLGIYQRLAALDARLMSDFGANLNYRKMLRK). The chain crosses the membrane as a helical span at residues 144-164 (NIAVLGIVTTIYLMAINSAAV). Over 165 to 171 (QVASGHR) the chain is Cytoplasmic. The chain crosses the membrane as a helical span at residues 172–192 (ALFLLFALCYTIVTGGPHFTG). Residues 193–295 (YVHMTLAEML…NEEENGSCYR (103 aa)) lie on the Extracellular side of the membrane. Residue Asn290 is glycosylated (N-linked (GlcNAc...) asparagine). A helical membrane pass occupies residues 296–316 (MLGYLALVMIPPLYKLLIAPF). Residues 317-374 (YCDRTIYEARRCLRLVEKLDDWFPQKSSLRPLVESLMSWRIQAKIQFTSGLDVVLSRK) lie on the Cytoplasmic side of the membrane. A helical transmembrane segment spans residues 375–395 (VIGLFTSILVNYLLILIQFAM). The Extracellular portion of the chain corresponds to 396 to 416 (TQKMGEQIEQQKIALQEWIGF).

The protein belongs to the insect chemoreceptor superfamily. Gustatory receptor (GR) family. Gr57a subfamily. In larvae, is expressed in neurons of the terminal external chemosensory organ as well as in the dorsal pharyngeal sense organ.

It is found in the cell membrane. In terms of biological role, probable gustatory receptor which mediates acceptance or avoidance behavior, depending on its substrates. This is Putative gustatory receptor 57a (Gr57a) from Drosophila melanogaster (Fruit fly).